The sequence spans 507 residues: MCDIEEATNQLLDVNLHENQKSVQVTESDLGSESELLVTIGATVPTGFEQTAADEVREKLGSSCKISRDRGKIYFVISVESLAQVHCLRSVDNLFVVVQEFQDYQFKQTKEEVLKDFEDLAGKLPWSNPLKVWKINASFKKKKAKRKKINQNSSKEKINNGQEVKIDQRNVKKEFTSHALDSHILDYYENPAIKEDVSTLIGDDLASCKDETDESSKEETEPQVLKFRVTCNRAGEKHCFTSNEAARDFGGAVQDYFKWKADMTNFDVEVLLNIHDNEVIVGIALTEESLHRRNITHFGPTTLRSTLAYGMLRLCDPLPYDIIVDPMCGTGAIPIEGATEWSDCFHIAGDNNPLAVNRAANNIASLLTKSQIKEGKPSWGLPIDAVQWDICNLPLRTGSVDIIVTDLPFGKRMGSKKRNWNLYPACLREMSRVCTPTTGRAVLLTQDTKCFTKALSGMRHVWRKVDTVWVNVGGLRAAVYVLIRTPQAFVHPSEQDGERGTLWQCKE.

The THUMP domain occupies 165–285 (KIDQRNVKKE…DNEVIVGIAL (121 aa)).

It belongs to the methyltransferase superfamily. In terms of assembly, part of the heterodimeric THUMPD3-TRM112 methyltransferase complex; this complex forms an active tRNA methyltransferase, where TRMT112 acts as an activator of the catalytic subunit THUMPD3.

Its subcellular location is the cytoplasm. The catalysed reaction is guanosine(6) in tRNA + S-adenosyl-L-methionine = N(2)-methylguanosine(6) in tRNA + S-adenosyl-L-homocysteine + H(+). It carries out the reaction guanosine(7) in tRNA + S-adenosyl-L-methionine = N(2)-methylguanosine(7) in tRNA + S-adenosyl-L-homocysteine + H(+). In terms of biological role, catalytic subunit of the THUMPD3-TRM112 methyltransferase complex, that specifically mediates the S-adenosyl-L-methionine-dependent N(2)-methylation of guanosine nucleotide at position 6 (m2G6) in tRNAs. This is one of the major tRNA (guanine-N(2))-methyltransferases. Also catalyzes the S-adenosyl-L-methionine-dependent N(2)-methylation of guanosine nucleotide at position 7 of tRNA(Trp). The sequence is that of tRNA (guanine(6)-N(2))-methyltransferase THUMP3 from Homo sapiens (Human).